The chain runs to 763 residues: Cyclin-F (763 aa).

The short motif at 19–27 (KRRVKRRPR) is the Nuclear localization signal 1 element. One can recognise an F-box domain in the interval 28 to 75 (VLTLLSLPEDVLLYVLECLPAVDILSMREVHPHLRSLVDSHSSVWARA). A Cyclin N-terminal domain is found at 299–411 (INKTSIFTTQ…EIISALEGKI (113 aa)). 2 consecutive short sequence motifs (d box) follow at residues 316–319 (RYIL) and 355–358 (RAKL). Disordered stretches follow at residues 574–600 (GSKT…TAEL) and 677–763 (KLEN…SDEL). The Nuclear localization signal 2 signature appears at 575 to 581 (SKTKRRR). Residues 580 to 590 (RREDSIQEDRG) show a composition bias toward basic and acidic residues. Residues 589 to 747 (RGSFVTTPTA…LFKASRRQVK (159 aa)) are PEST. Residues 692 to 710 (SSGYSSVSSGGSPTSSSSP) are compositionally biased toward low complexity. Basic residues predominate over residues 741 to 751 (ASRRQVKRKNQ).

This sequence belongs to the cyclin family. Cyclin AB subfamily. As to quaternary structure, component of the SCF(CCNF) complex.

The protein resides in the nucleus. It localises to the cytoplasm. The protein localises to the perinuclear region. Its subcellular location is the cytoskeleton. It is found in the microtubule organizing center. The protein resides in the centrosome. It localises to the centriole. Functionally, substrate recognition component of the SCF(CCNF) E3 ubiquitin-protein ligase complex which mediates the ubiquitination and subsequent proteasomal degradation of target proteins. The SCF(CCNF) E3 ubiquitin-protein ligase complex is an integral component of the ubiquitin proteasome system (UPS) and links proteasome degradation to the cell cycle. Mediates the substrate recognition and the proteasomal degradation of various target proteins during G2 phase involved in the regulation of cell cycle progression and in the maintenance of genome stability. The protein is Cyclin-F (ccnf) of Xenopus tropicalis (Western clawed frog).